Consider the following 92-residue polypeptide: Small ribosomal subunit protein uS19 (92 aa).

Belongs to the universal ribosomal protein uS19 family.

Functionally, protein S19 forms a complex with S13 that binds strongly to the 16S ribosomal RNA. This Anoxybacillus flavithermus (strain DSM 21510 / WK1) protein is Small ribosomal subunit protein uS19.